The sequence spans 679 residues: Penicillin-binding protein 1A (679 aa).

The span at M1–N14 shows a compositional bias: basic residues. Positions M1–N20 are disordered. The Cytoplasmic segment spans residues M1–W30. Residues F31 to L51 traverse the membrane as a helical; Signal-anchor for type II membrane protein segment. Topologically, residues S52 to E679 are extracellular. Residues S72–A244 form a transglycosylase region. The Proton donor; for transglycosylase activity role is filled by E111. The interval A378–G663 is transpeptidase. S417 functions as the Acyl-ester intermediate; for transpeptidase activity in the catalytic mechanism.

The protein in the N-terminal section; belongs to the glycosyltransferase 51 family. It in the C-terminal section; belongs to the transpeptidase family.

The protein localises to the cell membrane. The enzyme catalyses [GlcNAc-(1-&gt;4)-Mur2Ac(oyl-L-Ala-gamma-D-Glu-L-Lys-D-Ala-D-Ala)](n)-di-trans,octa-cis-undecaprenyl diphosphate + beta-D-GlcNAc-(1-&gt;4)-Mur2Ac(oyl-L-Ala-gamma-D-Glu-L-Lys-D-Ala-D-Ala)-di-trans,octa-cis-undecaprenyl diphosphate = [GlcNAc-(1-&gt;4)-Mur2Ac(oyl-L-Ala-gamma-D-Glu-L-Lys-D-Ala-D-Ala)](n+1)-di-trans,octa-cis-undecaprenyl diphosphate + di-trans,octa-cis-undecaprenyl diphosphate + H(+). The catalysed reaction is Preferential cleavage: (Ac)2-L-Lys-D-Ala-|-D-Ala. Also transpeptidation of peptidyl-alanyl moieties that are N-acyl substituents of D-alanine.. It functions in the pathway cell wall biogenesis; peptidoglycan biosynthesis. Its function is as follows. Cell wall formation. Synthesis of cross-linked peptidoglycan from the lipid intermediates. The enzyme has a penicillin-insensitive transglycosylase N-terminal domain (formation of linear glycan strands) and a penicillin-sensitive transpeptidase C-terminal domain (cross-linking of the peptide subunits). This Clostridium perfringens (strain 13 / Type A) protein is Penicillin-binding protein 1A (pbpA).